A 387-amino-acid polypeptide reads, in one-letter code: EP300-interacting inhibitor of differentiation 3 (387 aa).

Positions 1-19 (MSEEKCSLTGGEEKGEELA) are enriched in basic and acidic residues. The interval 1–77 (MSEEKCSLTG…SDDLSPEAPC (77 aa)) is disordered. A compositionally biased stretch (acidic residues) spans 32-72 (EEDDDDDEEALKKEEEEEEEEEEEDEEEEEEGPDSSSDDLS).

This sequence belongs to the NSE4 family. As to quaternary structure, component of the SMC5-SMC6 complex which consists at least of SMC5, SMC6, NSMCE2, NSMCE1, NSMCE4A or EID3 and NSMCE3. NSMCE1, NSMCE4A or EID3 and NSMCE3 probably form a subcomplex that bridges the head domains of the SMC5:SMC6 heterodimer. Homodimer, and heterodimer with EID2. Interacts with the C-terminal region of CREBBP.

Its subcellular location is the nucleus. The protein localises to the cytoplasm. The protein resides in the chromosome. It localises to the telomere. Tissue-specific component of the SMC5-SMC6 complex, a complex involved in repair of DNA double-strand breaks by homologous recombination. The complex may promote sister chromatid homologous recombination by recruiting the SMC1-SMC3 cohesin complex to double-strand breaks. The complex is required for telomere maintenance via recombination and mediates sumoylation of shelterin complex (telosome) components. Functionally, acts as a repressor of nuclear receptor-dependent transcription possibly by interfering with CREBBP-dependent coactivation. May function as a coinhibitor of other CREBBP/EP300-dependent transcription factors. The protein is EP300-interacting inhibitor of differentiation 3 of Rattus norvegicus (Rat).